The chain runs to 89 residues: uncharacterized protein (89 aa).

A helical membrane pass occupies residues 67–86; it reads VYLSSMYICFILLAIWMTVW.

It is found in the membrane. This is an uncharacterized protein from Bacillus subtilis (strain 168).